Consider the following 293-residue polypeptide: Large ribosomal subunit protein uL18 (293 aa).

A compositionally biased stretch (basic and acidic residues) spans 247–263; that stretch reads IRANPAHEKKQPRDGLV. The interval 247 to 283 is disordered; it reads IRANPAHEKKQPRDGLVKKRWNRAKMSLKQKRDRVKQ. The segment covering 264–283 has biased composition (basic residues); the sequence is KKRWNRAKMSLKQKRDRVKQ.

The protein belongs to the universal ribosomal protein uL18 family. Component of the large ribosomal subunit (LSU).

It localises to the cytoplasm. The protein resides in the nucleus. Functionally, component of the ribosome, a large ribonucleoprotein complex responsible for the synthesis of proteins in the cell. The small ribosomal subunit (SSU) binds messenger RNAs (mRNAs) and translates the encoded message by selecting cognate aminoacyl-transfer RNA (tRNA) molecules. The large subunit (LSU) contains the ribosomal catalytic site termed the peptidyl transferase center (PTC), which catalyzes the formation of peptide bonds, thereby polymerizing the amino acids delivered by tRNAs into a polypeptide chain. The nascent polypeptides leave the ribosome through a tunnel in the LSU and interact with protein factors that function in enzymatic processing, targeting, and the membrane insertion of nascent chains at the exit of the ribosomal tunnel. This chain is Large ribosomal subunit protein uL18 (RPL5), found in Suberites domuncula (Sponge).